The chain runs to 160 residues: Small ribosomal subunit protein uS7A (160 aa).

This sequence belongs to the universal ribosomal protein uS7 family. Part of the 30S ribosomal subunit. Contacts proteins S9 and S11.

One of the primary rRNA binding proteins, it binds directly to 16S rRNA where it nucleates assembly of the head domain of the 30S subunit. Is located at the subunit interface close to the decoding center, probably blocks exit of the E-site tRNA. The chain is Small ribosomal subunit protein uS7A from Aquifex aeolicus (strain VF5).